Reading from the N-terminus, the 253-residue chain is Phosphoglycerate mutase 2 (253 aa).

Phosphothreonine is present on Thr-3. Substrate-binding positions include 10–17, 23–24, Arg-62, 89–92, Lys-100, and 116–117; these read RHGESLWN, CG, ERHY, and RR. His-11 serves as the catalytic Tele-phosphohistidine intermediate. At Ser-14 the chain carries Phosphoserine. The Proton donor/acceptor role is filled by Glu-89. Ser-118 carries the phosphoserine modification. Thr-121 bears the Phosphothreonine mark. Tyr-132 and Tyr-133 each carry phosphotyrosine. Ser-135 carries the phosphoserine modification. Thr-152 carries the post-translational modification Phosphothreonine. 187-188 is a substrate binding site; that stretch reads GN.

Belongs to the phosphoglycerate mutase family. BPG-dependent PGAM subfamily. As to quaternary structure, homodimer. Interacts with ENO1. As to expression, expressed in the testes (at protein level).

The catalysed reaction is (2R)-2-phosphoglycerate = (2R)-3-phosphoglycerate. It carries out the reaction (2R)-3-phospho-glyceroyl phosphate = (2R)-2,3-bisphosphoglycerate + H(+). Interconversion of 3- and 2-phosphoglycerate with 2,3-bisphosphoglycerate as the primer of the reaction. Can also catalyze the reaction of EC 5.4.2.4 (synthase), but with a reduced activity. The chain is Phosphoglycerate mutase 2 (Pgam2) from Mus musculus (Mouse).